We begin with the raw amino-acid sequence, 170 residues long: ATP synthase subunit b (170 aa).

A helical transmembrane segment spans residues 20–42 (QLLAMLVLLALLKKFALGPLLNI).

It belongs to the ATPase B chain family. F-type ATPases have 2 components, F(1) - the catalytic core - and F(0) - the membrane proton channel. F(1) has five subunits: alpha(3), beta(3), gamma(1), delta(1), epsilon(1). F(0) has three main subunits: a(1), b(2) and c(10-14). The alpha and beta chains form an alternating ring which encloses part of the gamma chain. F(1) is attached to F(0) by a central stalk formed by the gamma and epsilon chains, while a peripheral stalk is formed by the delta and b chains.

It localises to the cell membrane. Functionally, f(1)F(0) ATP synthase produces ATP from ADP in the presence of a proton or sodium gradient. F-type ATPases consist of two structural domains, F(1) containing the extramembraneous catalytic core and F(0) containing the membrane proton channel, linked together by a central stalk and a peripheral stalk. During catalysis, ATP synthesis in the catalytic domain of F(1) is coupled via a rotary mechanism of the central stalk subunits to proton translocation. Component of the F(0) channel, it forms part of the peripheral stalk, linking F(1) to F(0). This is ATP synthase subunit b from Bacillus velezensis (strain DSM 23117 / BGSC 10A6 / LMG 26770 / FZB42) (Bacillus amyloliquefaciens subsp. plantarum).